Reading from the N-terminus, the 292-residue chain is MFSRLSAVSLRQGFVVQRRLFSYARPLLNSGSQATANQNTARETNNEYQYSGTRIVPKLSTFYSANPHHEAHIDNLEALMRKYIKYPTVQVEERPMWLSLQEYALIGGGSRLKSTQYKQLLFLLNRLNSIDPQLMVPEISNTLAKYHKKTKLQPQRDTLKELDEFGRSLAIGRRKTATAKVYVVRGEGQILVNDRALNDYFVKMKDRESIMYPLKAIDSVGKYNIFAMVSGGGTTAQADAIMHAIGKALVTFNPLLKTRLHRSGVLTRDYRHVERKKPGKRKARKMPTWVKR.

Residues 273-292 (VERKKPGKRKARKMPTWVKR) are disordered.

This sequence belongs to the universal ribosomal protein uS9 family.

The protein localises to the mitochondrion. This chain is Small ribosomal subunit protein uS9m (MRPS9), found in Kluyveromyces marxianus (Yeast).